The sequence spans 101 residues: Putative pterin-4-alpha-carbinolamine dehydratase (101 aa).

It belongs to the pterin-4-alpha-carbinolamine dehydratase family.

It carries out the reaction (4aS,6R)-4a-hydroxy-L-erythro-5,6,7,8-tetrahydrobiopterin = (6R)-L-erythro-6,7-dihydrobiopterin + H2O. The sequence is that of Putative pterin-4-alpha-carbinolamine dehydratase from Nitrobacter winogradskyi (strain ATCC 25391 / DSM 10237 / CIP 104748 / NCIMB 11846 / Nb-255).